Here is a 607-residue protein sequence, read N- to C-terminus: Inactive metallocarboxypeptidase ECM14 (607 aa).

An N-terminal signal peptide occupies residues 1–21 (MRLFTHGQVLALLAFVNTISA). The propeptide occupies 22-174 (IPSFSTNSYP…QTIYESYPSP (153 aa)). The region spanning 202-522 (NYQPLSVIVP…NAVMMLGRFL (321 aa)) is the Peptidase M14 domain. The Zn(2+) site is built by histidine 264 and glutamate 267. Substrate is bound by residues 264-267 (HARE), arginine 322, and 339-340 (DR). Cysteine 333 and cysteine 356 form a disulfide bridge. N-linked (GlcNAc...) asparagine glycosylation is present at asparagine 349. Residue histidine 396 coordinates Zn(2+). 397–398 (SY) is a binding site for substrate. A disordered region spans residues 539–607 (QRPNKDDKPI…GWGFRRLRKR (69 aa)). A compositionally biased stretch (acidic residues) spans 550–571 (NDDDDDDNDDDDDDDDDADTND). Over residues 573 to 590 (GIGRKDDSWVPDEYKGDN) the composition is skewed to basic and acidic residues.

Belongs to the peptidase M14 family. Requires Zn(2+) as cofactor.

It is found in the vacuole. The protein resides in the secreted. Functionally, inactive carboxypeptidase that may play a role in cell wall organization and biogenesis. This chain is Inactive metallocarboxypeptidase ECM14 (ECM14), found in Ajellomyces capsulatus (strain NAm1 / WU24) (Darling's disease fungus).